Reading from the N-terminus, the 292-residue chain is Homoserine kinase (292 aa).

Position 84–94 (84–94 (PLSRGLGSSSA)) interacts with ATP.

Belongs to the GHMP kinase family. Homoserine kinase subfamily.

Its subcellular location is the cytoplasm. It catalyses the reaction L-homoserine + ATP = O-phospho-L-homoserine + ADP + H(+). It participates in amino-acid biosynthesis; L-threonine biosynthesis; L-threonine from L-aspartate: step 4/5. Its function is as follows. Catalyzes the ATP-dependent phosphorylation of L-homoserine to L-homoserine phosphate. This is Homoserine kinase from Campylobacter jejuni subsp. doylei (strain ATCC BAA-1458 / RM4099 / 269.97).